A 145-amino-acid polypeptide reads, in one-letter code: Large ribosomal subunit protein uL15 (145 aa).

The segment at 1-57 is disordered; that stretch reads MKLNDLSPAPGSRREKHRPGRGIGSGLGKTGGRGHKGQTSRSGGTIAPGFEGGQQPL. The span at 21 to 31 shows a compositional bias: gly residues; it reads RGIGSGLGKTG.

It belongs to the universal ribosomal protein uL15 family. As to quaternary structure, part of the 50S ribosomal subunit.

Its function is as follows. Binds to the 23S rRNA. This is Large ribosomal subunit protein uL15 from Pseudomonas fluorescens (strain Pf0-1).